The sequence spans 306 residues: Methionyl-tRNA formyltransferase (306 aa).

109 to 112 is a (6S)-5,6,7,8-tetrahydrofolate binding site; that stretch reads SILP.

It belongs to the Fmt family.

The catalysed reaction is L-methionyl-tRNA(fMet) + (6R)-10-formyltetrahydrofolate = N-formyl-L-methionyl-tRNA(fMet) + (6S)-5,6,7,8-tetrahydrofolate + H(+). Functionally, attaches a formyl group to the free amino group of methionyl-tRNA(fMet). The formyl group appears to play a dual role in the initiator identity of N-formylmethionyl-tRNA by promoting its recognition by IF2 and preventing the misappropriation of this tRNA by the elongation apparatus. The protein is Methionyl-tRNA formyltransferase of Sphingopyxis alaskensis (strain DSM 13593 / LMG 18877 / RB2256) (Sphingomonas alaskensis).